A 165-amino-acid chain; its full sequence is Sorting nexin-12 (165 aa).

The tract at residues M1–T20 is disordered. S2 carries the post-translational modification N-acetylserine. Y23 carries the post-translational modification Phosphotyrosine. Positions N28–D151 constitute a PX domain. Residues R71, S73, K96, and R118 each contribute to the a 1,2-diacyl-sn-glycero-3-phospho-(1D-myo-inositol-3-phosphate) site. S73 is modified (phosphoserine).

Belongs to the sorting nexin family.

It is found in the membrane. Its function is as follows. May be involved in several stages of intracellular trafficking. The chain is Sorting nexin-12 (Snx12) from Mus musculus (Mouse).